Consider the following 662-residue polypeptide: UPF0313 protein CPE1196 (662 aa).

The region spanning 296–567 is the Radical SAM core domain; sequence AIEEVKFSLV…AMQRALLQFK (272 aa). C310, C314, and C317 together coordinate [4Fe-4S] cluster. A disordered region spans residues 597-662; the sequence is RDKNSFGKGN…QRGSKGKKRR (66 aa). Over residues 618–632 the composition is skewed to basic and acidic residues; the sequence is NRNENSGRRESEDKK. The segment covering 633 to 644 has biased composition (basic residues); it reads RSSHSKKQRGNK.

It belongs to the UPF0313 family. It depends on [4Fe-4S] cluster as a cofactor.

This Clostridium perfringens (strain 13 / Type A) protein is UPF0313 protein CPE1196.